The primary structure comprises 1683 residues: Phospholipase D1 (1683 aa).

Disordered stretches follow at residues 1-150 (MSNV…AYTQ), 173-198 (LKSSVNSPTPAGSGHRHNQHQHQQVN), 259-289 (ILDITNSNHNHRGNNNNNTGENSDRRPSIPR), and 384-416 (VMEKKAENKPSSAASAPHTSENNNNDNGSNITS). At S2 the chain carries N-acetylserine. Residues S8 and S30 each carry the phosphoserine modification. 3 stretches are compositionally biased toward basic and acidic residues: residues 20-34 (SVTEEVDRVNSRPDE), 63-82 (NGKEAERKHALPKSFVDRNL), and 90-112 (SLDHIMHSNEHDPRRGSDEENMH). Residues 116–125 (NNLHSSNNNV) show a composition bias toward low complexity. The span at 141–150 (RRSSSVAYTQ) shows a compositional bias: polar residues. Residue S145 is modified to Phosphoserine. A compositionally biased stretch (low complexity) spans 263 to 279 (TNSNHNHRGNNNNNTGE). In terms of domain architecture, PX spans 291–487 (SSIISISSNV…EFYELSPLGN (197 aa)). A compositionally biased stretch (polar residues) spans 392–404 (KPSSAASAPHTSE). Low complexity predominate over residues 405 to 416 (NNNNDNGSNITS). A PH domain is found at 496-664 (QGKQGYLVIR…SSIIKMSTST (169 aa)). PLD phosphodiesterase domains are found at residues 791–818 (YFWAHHEKFVVIDETFAFIGGTDLCYGR) and 1091–1118 (EQLYVHAKILIADDRRCIIGSANINERS). Residues H796, K798, D803, H1096, K1098, and D1103 contribute to the active site. The interval 1430 to 1465 (KDMRRHLSSSTESTRNGSNSLPLNEKSNEGESTNVD) is disordered. Residues 1437 to 1451 (SSSTESTRNGSNSLP) show a composition bias toward polar residues. At S1461 the chain carries Phosphoserine. Phosphothreonine is present on T1462.

Belongs to the phospholipase D family. In terms of assembly, interacts with SRF1.

It catalyses the reaction a 1,2-diacyl-sn-glycero-3-phosphocholine + H2O = a 1,2-diacyl-sn-glycero-3-phosphate + choline + H(+). With respect to regulation, activity is dependent of phosphatidylinositol 4,5-bisphosphate and the regulator SRF1. Inhibited by magnesium. Functionally, required for meiosis and spore formation. Seems to be involved in the coordinate induction of late meiotic events. PLD activity is induced under sporulation conditions and seems to be necessary to complete the meiotic cycle, but not for vegetative cell growth. In Saccharomyces cerevisiae (strain ATCC 204508 / S288c) (Baker's yeast), this protein is Phospholipase D1 (SPO14).